The following is a 321-amino-acid chain: 2-oxoglutarate-dependent dioxygenase frbH (321 aa).

The interval 77 to 97 is disordered; that stretch reads SRNSDTHGYEPVATSTGAQDD. The region spanning 169-273 is the Fe2OG dioxygenase domain; it reads ESLSTLSMFR…RFSIAYFLRA (105 aa). 3 residues coordinate Fe cation: histidine 194, aspartate 196, and histidine 251. Residue arginine 264 coordinates 2-oxoglutarate.

The protein belongs to the iron/ascorbate-dependent oxidoreductase family.

It functions in the pathway antifungal biosynthesis. In terms of biological role, 2-oxoglutarate-dependent dioxygenase; part of the gene cluster that mediates the biosynthesis of the antifungal antibiotic FR901469, an inhibitor of beta-1,3-glucansynthase, exerting antifungal activity against the pathogenes Candida albicans and Aspergillus fumigatus. FR901469 is a cyclic depsipeptide containing 12 amino acid residues and a fatty acid chain. The NRPS frbI contains 12 modules responsible for the formation of the depsipeptide backbone which is denoted as Acyl-Thr-Ala-Tyr-Val-4OHPro-Thr-Thr-3OHPro-threo3OHGln-Gly-Thr-Orn-OH (C71H116N14O23). The PKS frbB is probably involved in the production of the hydrocarbon chain, and the acyl-CoA ligase frbC might be involved in the transport of the chain to the peptide ptoduct of frbI. Because FR901469 contains 3 hydroxylated amino acid residues, the 3 oxygenases frbA, frbH, and frbJ might be participating in amino acid hydroxylation. As no thioesterase domains were detected in frbI or frbB, the thioesterases frbD and frbE may instead release and cyclize the products of the NRPS and PKS, respectively. This Dothideomycetidae sp. (strain 11243) (Fungal sp. (strain No.11243)) protein is 2-oxoglutarate-dependent dioxygenase frbH.